The sequence spans 211 residues: Dual specificity protein phosphatase 26 (211 aa).

The region spanning 60–207 (NHADEVWPGL…LLALDRRLRQ (148 aa)) is the Tyrosine-protein phosphatase domain. C152 acts as the Phosphocysteine intermediate in catalysis.

The protein belongs to the protein-tyrosine phosphatase family. Non-receptor class dual specificity subfamily. Interacts with HSF4.

The protein localises to the cytoplasm. Its subcellular location is the nucleus. It is found in the golgi apparatus. The catalysed reaction is O-phospho-L-tyrosyl-[protein] + H2O = L-tyrosyl-[protein] + phosphate. It catalyses the reaction O-phospho-L-seryl-[protein] + H2O = L-seryl-[protein] + phosphate. It carries out the reaction O-phospho-L-threonyl-[protein] + H2O = L-threonyl-[protein] + phosphate. Its function is as follows. Inactivates MAPK1 and MAPK3 which leads to dephosphorylation of heat shock factor protein 4 and a reduction in its DNA-binding activity. The polypeptide is Dual specificity protein phosphatase 26 (DUSP26) (Pongo abelii (Sumatran orangutan)).